The primary structure comprises 79 residues: Panulirin (79 aa).

A signal peptide spans M1–G22. The propeptide occupies D23–P26. 3 disulfide bridges follow: C33–C63, C40–C56, and C46–C64. Residues Q75 to A79 constitute a propeptide that is removed on maturation.

As to quaternary structure, monomer. In terms of processing, contains 3 disulfide bonds. Expressed in hemocytes (at protein level).

Functionally, involved in the melanization cascade in response to lipopolysaccharide (LPS). In vitro, reversibly and competitively inhibits trypsin (Ki=8.6 nM) but not serine proteases chymotrypsin, elastase, subtilisin, thrombin and plasmin, cysteine peptidase papain or metallopeptidase carboxypeptidase A. The protein is Panulirin of Panulirus argus (Caribbean spiny lobster).